A 284-amino-acid polypeptide reads, in one-letter code: 2-dehydro-3-deoxyphosphooctonate aldolase (284 aa).

The protein belongs to the KdsA family.

Its subcellular location is the cytoplasm. The catalysed reaction is D-arabinose 5-phosphate + phosphoenolpyruvate + H2O = 3-deoxy-alpha-D-manno-2-octulosonate-8-phosphate + phosphate. Its pathway is carbohydrate biosynthesis; 3-deoxy-D-manno-octulosonate biosynthesis; 3-deoxy-D-manno-octulosonate from D-ribulose 5-phosphate: step 2/3. It functions in the pathway bacterial outer membrane biogenesis; lipopolysaccharide biosynthesis. The protein is 2-dehydro-3-deoxyphosphooctonate aldolase of Aliivibrio fischeri (strain ATCC 700601 / ES114) (Vibrio fischeri).